Consider the following 1133-residue polypeptide: Lysylphosphatidylglycerol biosynthesis bifunctional protein LysX (1133 aa).

Positions 1–626 (MTTVDASPGI…LLHHDGSTPD (626 aa)) are phosphatidylglycerol lysyltransferase. Helical transmembrane passes span 43–63 (VPAAAGWTVGVIATLSLIASV), 82–102 (LFNFPDTSIAWSFVLALLAAA), 109–129 (IAWLLLLGNMVLAAVLNAVDM), 140–160 (FGENLGFAVHVVAILLLVLSY), 177–197 (AVLVAGDVIGILLSLGLVELF), 233–253 (LNAIFGLFGALALIMATIVLF), and 575–595 (LIPRVGVASVIAEGFLVLPFS). Residues 627–1133 (VSGLQTADVD…TLPFPLAKPH (507 aa)) form a lysine--tRNA ligase region. 2 residues coordinate Mg(2+): aspartate 1045 and glutamate 1052.

This sequence in the N-terminal section; belongs to the LPG synthetase family. The protein in the C-terminal section; belongs to the class-II aminoacyl-tRNA synthetase family. It depends on Mg(2+) as a cofactor.

Its subcellular location is the cell membrane. It carries out the reaction tRNA(Lys) + L-lysine + ATP = L-lysyl-tRNA(Lys) + AMP + diphosphate. The enzyme catalyses L-lysyl-tRNA(Lys) + a 1,2-diacyl-sn-glycero-3-phospho-(1'-sn-glycerol) = a 1,2-diacyl-sn-glycero-3-phospho-1'-(3'-O-L-lysyl)-sn-glycerol + tRNA(Lys). Functionally, catalyzes the production of L-lysyl-tRNA(Lys)transfer and the transfer of a lysyl group from L-lysyl-tRNA(Lys) to membrane-bound phosphatidylglycerol (PG), which produces lysylphosphatidylglycerol (LPG), one of the components of the bacterial membrane with a positive net charge. LPG synthesis contributes to the resistance to cationic antimicrobial peptides (CAMPs) and likely protects M.tuberculosis against the CAMPs produced by competiting microorganisms (bacteriocins). In fact, the modification of anionic phosphatidylglycerol with positively charged L-lysine results in repulsion of the peptides. The protein is Lysylphosphatidylglycerol biosynthesis bifunctional protein LysX (lysX) of Mycobacterium leprae (strain Br4923).